A 575-amino-acid polypeptide reads, in one-letter code: Isocitrate dehydrogenase kinase/phosphatase (575 aa).

Residues 315-321 (APGVKGM) and Lys336 each bind ATP. Asp371 is a catalytic residue.

Belongs to the AceK family.

The protein localises to the cytoplasm. It catalyses the reaction L-seryl-[isocitrate dehydrogenase] + ATP = O-phospho-L-seryl-[isocitrate dehydrogenase] + ADP + H(+). Functionally, bifunctional enzyme which can phosphorylate or dephosphorylate isocitrate dehydrogenase (IDH) on a specific serine residue. This is a regulatory mechanism which enables bacteria to bypass the Krebs cycle via the glyoxylate shunt in response to the source of carbon. When bacteria are grown on glucose, IDH is fully active and unphosphorylated, but when grown on acetate or ethanol, the activity of IDH declines drastically concomitant with its phosphorylation. The sequence is that of Isocitrate dehydrogenase kinase/phosphatase from Yersinia enterocolitica serotype O:8 / biotype 1B (strain NCTC 13174 / 8081).